A 95-amino-acid chain; its full sequence is Integration host factor subunit beta (95 aa).

The protein belongs to the bacterial histone-like protein family. Heterodimer of an alpha and a beta chain.

Functionally, this protein is one of the two subunits of integration host factor, a specific DNA-binding protein that functions in genetic recombination as well as in transcriptional and translational control. The sequence is that of Integration host factor subunit beta from Shewanella putrefaciens (strain CN-32 / ATCC BAA-453).